We begin with the raw amino-acid sequence, 355 residues long: Isopentenyl-diphosphate delta-isomerase (355 aa).

Arg-6–Lys-7 lines the substrate pocket. FMN is bound by residues Ala-62–Thr-64, Ser-93, and Asn-122. Gln-152 provides a ligand contact to substrate. Glu-153 is a Mg(2+) binding site. FMN contacts are provided by residues Lys-184, Thr-214, Gly-258–Gly-259, and Ala-280–Gly-281.

It belongs to the IPP isomerase type 2 family. Homooctamer. Dimer of tetramers. Requires FMN as cofactor. It depends on NADPH as a cofactor. Mg(2+) serves as cofactor.

The protein resides in the cytoplasm. The catalysed reaction is isopentenyl diphosphate = dimethylallyl diphosphate. In terms of biological role, involved in the biosynthesis of isoprenoids. Catalyzes the 1,3-allylic rearrangement of the homoallylic substrate isopentenyl (IPP) to its allylic isomer, dimethylallyl diphosphate (DMAPP). The chain is Isopentenyl-diphosphate delta-isomerase from Bacillus pumilus (strain SAFR-032).